The sequence spans 177 residues: Nucleoside-triphosphatase THEP1 (177 aa).

Residues 10 to 17 and 101 to 108 each bind ATP; these read GKPGIGKT and CLVIDEIG.

It belongs to the THEP1 NTPase family.

The enzyme catalyses a ribonucleoside 5'-triphosphate + H2O = a ribonucleoside 5'-diphosphate + phosphate + H(+). Its function is as follows. Has nucleotide phosphatase activity towards ATP, GTP, CTP, TTP and UTP. May hydrolyze nucleoside diphosphates with lower efficiency. This Natranaerobius thermophilus (strain ATCC BAA-1301 / DSM 18059 / JW/NM-WN-LF) protein is Nucleoside-triphosphatase THEP1.